The primary structure comprises 289 residues: Probable prolyl 4-hydroxylase 10 (289 aa).

A helical; Signal-anchor for type II membrane protein membrane pass occupies residues 20-40; sequence LVFAVLIMSTFVILILLAFGI. Topologically, residues 41 to 289 are lumenal; it reads LSVPSNNAGS…KWLRVHEYKV (249 aa). The Fe2OG dioxygenase domain maps to 161–284; it reads HGEGLQVLHY…KWSSTKWLRV (124 aa). Fe cation contacts are provided by histidine 179 and aspartate 181. Asparagine 220 is a glycosylation site (N-linked (GlcNAc...) asparagine). Histidine 265 provides a ligand contact to Fe cation. 2-oxoglutarate is bound at residue lysine 275.

This sequence belongs to the P4HA family. Fe(2+) is required as a cofactor. It depends on L-ascorbate as a cofactor.

The protein localises to the endoplasmic reticulum membrane. The catalysed reaction is L-prolyl-[collagen] + 2-oxoglutarate + O2 = trans-4-hydroxy-L-prolyl-[collagen] + succinate + CO2. Its function is as follows. Catalyzes the post-translational formation of 4-hydroxyproline in -Xaa-Pro-Gly- sequences in proline-rich peptide sequences of plant glycoproteins and other proteins. Hydroxyprolines are important constituent of many plant cell wall glycoproteins such as extensins, hydroxyproline-rich glycoproteins, lectins and arabinogalactan proteins. In Arabidopsis thaliana (Mouse-ear cress), this protein is Probable prolyl 4-hydroxylase 10.